Consider the following 368-residue polypeptide: Homoserine O-acetyltransferase (368 aa).

Residues 44–350 (NAILVAHAWT…AYGHDAFLLE (307 aa)) form the AB hydrolase-1 domain. Catalysis depends on Ser-150, which acts as the Nucleophile. Substrate is bound at residue Arg-217. Catalysis depends on residues Asp-311 and His-344. Residue Asp-345 coordinates substrate.

This sequence belongs to the AB hydrolase superfamily. MetX family. In terms of assembly, homodimer.

Its subcellular location is the cytoplasm. It carries out the reaction L-homoserine + acetyl-CoA = O-acetyl-L-homoserine + CoA. It participates in amino-acid biosynthesis; L-methionine biosynthesis via de novo pathway; O-acetyl-L-homoserine from L-homoserine: step 1/1. Functionally, transfers an acetyl group from acetyl-CoA to L-homoserine, forming acetyl-L-homoserine. The sequence is that of Homoserine O-acetyltransferase from Geobacter sulfurreducens (strain ATCC 51573 / DSM 12127 / PCA).